A 116-amino-acid chain; its full sequence is MKAIIKEDVQASLERYADRPVYIHLETTTGSYSAHLNEKNMTVVAYIRNAKVTYHQAKIKGNGPYRVGLKTEEGWIYAEGLTEYTVDEENRLLMAGHLPGGKLAISLQISEKPFTV.

This is an uncharacterized protein from Bacillus subtilis (strain 168).